A 290-amino-acid polypeptide reads, in one-letter code: Ribonuclease 3 (290 aa).

Residues 20-145 (YSCFYRILGF…FIGAIYLDRG (126 aa)) form the RNase III domain. Position 62 (E62) interacts with Mg(2+). Residue D66 is part of the active site. Mg(2+) is bound by residues N131 and E134. E134 is an active-site residue. One can recognise a DRBM domain in the interval 173-242 (NFKSKLIEWS…AQMTLKKIKG (70 aa)). The disordered stretch occupies residues 254–290 (KTQNNVPAEDTTPESETSLTAENQQIDEIISTEEISV). Polar residues predominate over residues 267–279 (ESETSLTAENQQI).

Belongs to the ribonuclease III family. In terms of assembly, homodimer. Mg(2+) is required as a cofactor.

It localises to the cytoplasm. It catalyses the reaction Endonucleolytic cleavage to 5'-phosphomonoester.. Its function is as follows. Digests double-stranded RNA. Involved in the processing of primary rRNA transcript to yield the immediate precursors to the large and small rRNAs (23S and 16S). Processes some mRNAs, and tRNAs when they are encoded in the rRNA operon. Processes pre-crRNA and tracrRNA of type II CRISPR loci if present in the organism. This Bacteroides fragilis (strain ATCC 25285 / DSM 2151 / CCUG 4856 / JCM 11019 / LMG 10263 / NCTC 9343 / Onslow / VPI 2553 / EN-2) protein is Ribonuclease 3.